A 133-amino-acid polypeptide reads, in one-letter code: uncharacterized protein (133 aa).

The helical transmembrane segment at 36–56 threads the bilayer; it reads LPMLIALACIFLLLATCLLFM. The segment at 105–133 is disordered; the sequence is HGRPTVPRQPLPGPEDNRSHCDYMESTKM. Basic and acidic residues predominate over residues 119–133; that stretch reads EDNRSHCDYMESTKM.

It localises to the membrane. This is an uncharacterized protein from Homo sapiens (Human).